We begin with the raw amino-acid sequence, 677 residues long: UvrABC system protein B (677 aa).

The Helicase ATP-binding domain maps to 27-414 (ANLGHGVRDQ…SQGVIAEQII (388 aa)). Position 40–47 (40–47 (GVTGSGKT)) interacts with ATP. The Beta-hairpin signature appears at 93–116 (YYDYYQPEAYVPASDTYIEKDSSI). Positions 432 to 594 (QVDDLLAECR…IEPRTIRKSL (163 aa)) constitute a Helicase C-terminal domain. Residues 638-673 (AKHIQKLEREMREAAKELEFERAATLRDRIRLLRER) form the UVR domain.

It belongs to the UvrB family. As to quaternary structure, forms a heterotetramer with UvrA during the search for lesions. Interacts with UvrC in an incision complex.

The protein resides in the cytoplasm. Functionally, the UvrABC repair system catalyzes the recognition and processing of DNA lesions. A damage recognition complex composed of 2 UvrA and 2 UvrB subunits scans DNA for abnormalities. Upon binding of the UvrA(2)B(2) complex to a putative damaged site, the DNA wraps around one UvrB monomer. DNA wrap is dependent on ATP binding by UvrB and probably causes local melting of the DNA helix, facilitating insertion of UvrB beta-hairpin between the DNA strands. Then UvrB probes one DNA strand for the presence of a lesion. If a lesion is found the UvrA subunits dissociate and the UvrB-DNA preincision complex is formed. This complex is subsequently bound by UvrC and the second UvrB is released. If no lesion is found, the DNA wraps around the other UvrB subunit that will check the other stand for damage. This is UvrABC system protein B from Nitratidesulfovibrio vulgaris (strain ATCC 29579 / DSM 644 / CCUG 34227 / NCIMB 8303 / VKM B-1760 / Hildenborough) (Desulfovibrio vulgaris).